Consider the following 200-residue polypeptide: RNA polymerase I-specific transcription initiation factor rrn11 (200 aa).

It localises to the nucleus. In terms of biological role, subunit of a multiprotein complex essential for the initiation of rDNA transcription by RNA polymerase I. Binding to the DNA template is dependent on the initial binding of other factors. The protein is RNA polymerase I-specific transcription initiation factor rrn11 (rrn11) of Schizosaccharomyces pombe (strain 972 / ATCC 24843) (Fission yeast).